The chain runs to 58 residues: ATP synthase F(0) complex subunit k, mitochondrial (58 aa).

K16 and K17 each carry N6-acetyllysine. The helical transmembrane segment at T23 to F45 threads the bilayer.

As to quaternary structure, component of the ATP synthase complex composed at least of ATP5F1A/subunit alpha, ATP5F1B/subunit beta, ATP5MC1/subunit c (homooctomer), MT-ATP6/subunit a, MT-ATP8/subunit 8, ATP5ME/subunit e, ATP5MF/subunit f, ATP5MG/subunit g, ATP5MK/subunit k, ATP5MJ/subunit j, ATP5F1C/subunit gamma, ATP5F1D/subunit delta, ATP5F1E/subunit epsilon, ATP5PF/subunit F6, ATP5PB/subunit b, ATP5PD/subunit d, ATP5PO/subunit OSCP. ATP synthase complex consists of a soluble F(1) head domain (subunits alpha(3) and beta(3)) - the catalytic core - and a membrane F(0) domain - the membrane proton channel (subunits c, a, 8, e, f, g, k and j). These two domains are linked by a central stalk (subunits gamma, delta, and epsilon) rotating inside the F1 region and a stationary peripheral stalk (subunits F6, b, d, and OSCP). The ATP synthase complex/complex V exists as a monomeric and a dimeric supercomplex that helps shape mitochondrial cristae to optimize proton flow.

It is found in the mitochondrion membrane. Its function is as follows. Subunit k, of the mitochondrial membrane ATP synthase complex (F(1)F(0) ATP synthase or Complex V) that produces ATP from ADP in the presence of a proton gradient across the membrane which is generated by electron transport complexes of the respiratory chain. ATP synthase complex consist of a soluble F(1) head domain - the catalytic core - and a membrane F(1) domain - the membrane proton channel. These two domains are linked by a central stalk rotating inside the F(1) region and a stationary peripheral stalk. During catalysis, ATP synthesis in the catalytic domain of F(1) is coupled via a rotary mechanism of the central stalk subunits to proton translocation. In vivo, can only synthesize ATP although its ATP hydrolase activity can be activated artificially in vitro. Part of the complex F(0) domain. Required for dimerization of the ATP synthase complex and as such regulates ATP synthesis in the mitochondria. This is ATP synthase F(0) complex subunit k, mitochondrial from Homo sapiens (Human).